The primary structure comprises 508 residues: Anthranilate synthase component 1 (508 aa).

Residues Ser-49 and 282–284 (PYM) each bind L-tryptophan. 317-318 (GT) is a chorismate binding site. Glu-344 contributes to the Mg(2+) binding site. Chorismate is bound by residues Tyr-432, Arg-452, 466–468 (GAG), and Gly-468. A Mg(2+)-binding site is contributed by Glu-481.

This sequence belongs to the anthranilate synthase component I family. Heterotetramer consisting of two non-identical subunits: a beta subunit (TrpG) and a large alpha subunit (TrpE). Mg(2+) serves as cofactor.

It carries out the reaction chorismate + L-glutamine = anthranilate + pyruvate + L-glutamate + H(+). It functions in the pathway amino-acid biosynthesis; L-tryptophan biosynthesis; L-tryptophan from chorismate: step 1/5. Feedback inhibited by tryptophan. Functionally, part of a heterotetrameric complex that catalyzes the two-step biosynthesis of anthranilate, an intermediate in the biosynthesis of L-tryptophan. In the first step, the glutamine-binding beta subunit (TrpG) of anthranilate synthase (AS) provides the glutamine amidotransferase activity which generates ammonia as a substrate that, along with chorismate, is used in the second step, catalyzed by the large alpha subunit of AS (TrpE) to produce anthranilate. In the absence of TrpG, TrpE can synthesize anthranilate directly from chorismate and high concentrations of ammonia. The sequence is that of Anthranilate synthase component 1 (trpE) from Bacillus caldotenax.